The sequence spans 343 residues: Biotin synthase (343 aa).

The 219-residue stretch at 36–254 (RQVQVSTLLS…IAVARIMMPR (219 aa)) folds into the Radical SAM core domain. Positions 51, 55, and 58 each coordinate [4Fe-4S] cluster. [2Fe-2S] cluster-binding residues include cysteine 95, cysteine 126, cysteine 186, and arginine 258.

This sequence belongs to the radical SAM superfamily. Biotin synthase family. Homodimer. The cofactor is [4Fe-4S] cluster. [2Fe-2S] cluster is required as a cofactor.

It carries out the reaction (4R,5S)-dethiobiotin + (sulfur carrier)-SH + 2 reduced [2Fe-2S]-[ferredoxin] + 2 S-adenosyl-L-methionine = (sulfur carrier)-H + biotin + 2 5'-deoxyadenosine + 2 L-methionine + 2 oxidized [2Fe-2S]-[ferredoxin]. It participates in cofactor biosynthesis; biotin biosynthesis; biotin from 7,8-diaminononanoate: step 2/2. Catalyzes the conversion of dethiobiotin (DTB) to biotin by the insertion of a sulfur atom into dethiobiotin via a radical-based mechanism. The chain is Biotin synthase from Erwinia tasmaniensis (strain DSM 17950 / CFBP 7177 / CIP 109463 / NCPPB 4357 / Et1/99).